Consider the following 211-residue polypeptide: Protein-methionine-sulfoxide reductase heme-binding subunit MsrQ (211 aa).

4 consecutive transmembrane segments (helical) span residues 17–37 (LAGLLPFLWLVWAINHGGLGA), 82–102 (LWCFAWATLHLTSYALLELGV), 116–136 (PYLTLGIISWVILLALAFTST), and 153–173 (FVYLVAILAPIHYLWSVKIIS).

It belongs to the MsrQ family. Heterodimer of a catalytic subunit (MsrP) and a heme-binding subunit (MsrQ). It depends on FMN as a cofactor. Heme b is required as a cofactor.

It is found in the cell inner membrane. Functionally, part of the MsrPQ system that repairs oxidized periplasmic proteins containing methionine sulfoxide residues (Met-O), using respiratory chain electrons. Thus protects these proteins from oxidative-stress damage caused by reactive species of oxygen and chlorine generated by the host defense mechanisms. MsrPQ is essential for the maintenance of envelope integrity under bleach stress, rescuing a wide series of structurally unrelated periplasmic proteins from methionine oxidation, including the primary periplasmic chaperone SurA and the lipoprotein Pal. MsrQ provides electrons for reduction to the reductase catalytic subunit MsrP, using the quinone pool of the respiratory chain. This is Protein-methionine-sulfoxide reductase heme-binding subunit MsrQ from Shigella sonnei (strain Ss046).